We begin with the raw amino-acid sequence, 1129 residues long: Large proline-rich protein bag6 (1129 aa).

The 76-residue stretch at 1 to 76 (MEVTVKTLDS…HLVERAPPQT (76 aa)) folds into the Ubiquitin-like domain. Disordered regions lie at residues 69 to 108 (VERA…PERN), 187 to 235 (QPVN…SPSE), 347 to 402 (TGNG…HPHP), 490 to 518 (PAAP…VPGA), 550 to 606 (GSNT…QHLS), 654 to 692 (VPVS…ESLP), 942 to 967 (VPQA…NGAA), and 987 to 1009 (VPTI…QWAA). Residues 73 to 105 (PPQTQPSTGGPSTSSSTSPSSSNAANVPGAGAP) are compositionally biased toward low complexity. Polar residues-rich tracts occupy residues 209-232 (RETL…SHPS) and 364-383 (HTPT…QPPS). Composition is skewed to low complexity over residues 553–593 (TPSS…SSGP) and 655–666 (PVSTSPPQSASQ). A compositionally biased stretch (pro residues) spans 667 to 686 (APPPSSPSPPPAHSSPPPAA). The span at 947 to 956 (EASSQDQPME) shows a compositional bias: polar residues.

In terms of assembly, component of the bag6/bat3 complex.

Its subcellular location is the cytoplasm. It is found in the cytosol. It localises to the nucleus. The protein resides in the secreted. The protein localises to the extracellular exosome. ATP-independent molecular chaperone preventing the aggregation of misfolded and hydrophobic patches-containing proteins. Functions as part of a cytosolic protein quality control complex, the bag6/bat3 complex, which maintains these client proteins in a soluble state and participates in their proper delivery to the endoplasmic reticulum or alternatively can promote their sorting to the proteasome where they undergo degradation. The bag6/bat3 complex is involved in the post-translational delivery of tail-anchored/type II transmembrane proteins to the endoplasmic reticulum membrane. Similarly, the bag6/bat3 complex also functions as a sorting platform for proteins of the secretory pathway that are mislocalized to the cytosol either delivering them to the proteasome for degradation or to the endoplasmic reticulum. The bag6/bat3 complex also plays a role in the endoplasmic reticulum-associated degradation (ERAD), a quality control mechanism that eliminates unwanted proteins of the endoplasmic reticulum through their retrotranslocation to the cytosol and their targeting to the proteasome. It maintains these retrotranslocated proteins in an unfolded yet soluble state condition in the cytosol to ensure their proper delivery to the proteasome. Also required for selective ubiquitin-mediated degradation of defective nascent chain polypeptides by the proteasome. Also involved in endoplasmic reticulum stress-induced pre-emptive quality control, a mechanism that selectively attenuates the translocation of newly synthesized proteins into the endoplasmic reticulum and reroutes them to the cytosol for proteasomal degradation. May ensure the proper degradation of these proteins and thereby protects the endoplasmic reticulum from protein overload upon stress. By stabilizing a large spectrum of proteins, may indirectly affect different biological processes including apoptosis. By controlling the steady-state expression of the IGF1R receptor, indirectly regulates the insulin-like growth factor receptor signaling pathway. Functionally, when nuclear, may also act as a component of some chromatin regulator complex. This is Large proline-rich protein bag6 from Xenopus tropicalis (Western clawed frog).